A 442-amino-acid chain; its full sequence is Thymidine phosphorylase (442 aa).

Belongs to the thymidine/pyrimidine-nucleoside phosphorylase family. Homodimer.

It catalyses the reaction thymidine + phosphate = 2-deoxy-alpha-D-ribose 1-phosphate + thymine. Its pathway is pyrimidine metabolism; dTMP biosynthesis via salvage pathway; dTMP from thymine: step 1/2. Its function is as follows. The enzymes which catalyze the reversible phosphorolysis of pyrimidine nucleosides are involved in the degradation of these compounds and in their utilization as carbon and energy sources, or in the rescue of pyrimidine bases for nucleotide synthesis. The protein is Thymidine phosphorylase of Vibrio vulnificus (strain CMCP6).